Here is a 187-residue protein sequence, read N- to C-terminus: Phosphoheptose isomerase (187 aa).

The region spanning 34-187 (CIEALKNQKK…ILCSLIDESF (154 aa)) is the SIS domain. Residue 49 to 51 (NGG) coordinates substrate. Zn(2+) contacts are provided by His58 and Glu62. Substrate is bound by residues Glu62, 91–92 (ND), 117–119 (STS), Ser122, and Gln169. Gln169 and His177 together coordinate Zn(2+).

The protein belongs to the SIS family. GmhA subfamily. In terms of assembly, homotetramer. It depends on Zn(2+) as a cofactor.

It is found in the cytoplasm. It carries out the reaction 2 D-sedoheptulose 7-phosphate = D-glycero-alpha-D-manno-heptose 7-phosphate + D-glycero-beta-D-manno-heptose 7-phosphate. It participates in carbohydrate biosynthesis; D-glycero-D-manno-heptose 7-phosphate biosynthesis; D-glycero-alpha-D-manno-heptose 7-phosphate and D-glycero-beta-D-manno-heptose 7-phosphate from sedoheptulose 7-phosphate: step 1/1. Catalyzes the isomerization of sedoheptulose 7-phosphate in D-glycero-D-manno-heptose 7-phosphate. In Nitratiruptor sp. (strain SB155-2), this protein is Phosphoheptose isomerase.